The chain runs to 415 residues: Serine--tRNA ligase (415 aa).

231–233 (TAE) contributes to the L-serine binding site. Residue 262–264 (RSE) participates in ATP binding. Glu-285 is an L-serine binding site. 349–352 (EISS) contacts ATP. Ser-383 provides a ligand contact to L-serine.

Belongs to the class-II aminoacyl-tRNA synthetase family. Type-1 seryl-tRNA synthetase subfamily. As to quaternary structure, homodimer. The tRNA molecule binds across the dimer.

Its subcellular location is the cytoplasm. The enzyme catalyses tRNA(Ser) + L-serine + ATP = L-seryl-tRNA(Ser) + AMP + diphosphate + H(+). It carries out the reaction tRNA(Sec) + L-serine + ATP = L-seryl-tRNA(Sec) + AMP + diphosphate + H(+). It participates in aminoacyl-tRNA biosynthesis; selenocysteinyl-tRNA(Sec) biosynthesis; L-seryl-tRNA(Sec) from L-serine and tRNA(Sec): step 1/1. In terms of biological role, catalyzes the attachment of serine to tRNA(Ser). Is also able to aminoacylate tRNA(Sec) with serine, to form the misacylated tRNA L-seryl-tRNA(Sec), which will be further converted into selenocysteinyl-tRNA(Sec). This Helicobacter pylori (strain G27) protein is Serine--tRNA ligase.